A 117-amino-acid polypeptide reads, in one-letter code: Large ribosomal subunit protein bL20c (117 aa).

Belongs to the bacterial ribosomal protein bL20 family.

It localises to the plastid. Its subcellular location is the chloroplast. In terms of biological role, binds directly to 23S ribosomal RNA and is necessary for the in vitro assembly process of the 50S ribosomal subunit. It is not involved in the protein synthesizing functions of that subunit. The protein is Large ribosomal subunit protein bL20c of Ceratophyllum demersum (Rigid hornwort).